We begin with the raw amino-acid sequence, 345 residues long: Pectin lyase (345 aa).

A signal peptide spans 1–24 (MKRFCLWFAVFSLLLVLLPGKAFG). Residue arginine 234 is part of the active site.

It belongs to the polysaccharide lyase 1 family.

It localises to the secreted. The catalysed reaction is Eliminative cleavage of (1-&gt;4)-alpha-D-galacturonan methyl ester to give oligosaccharides with 4-deoxy-6-O-methyl-alpha-D-galact-4-enuronosyl groups at their non-reducing ends.. Its activity is regulated as follows. Inhibited by Hg(2+) and Mn(2+). Not affected by EDTA in vitro. In terms of biological role, catalyzes the depolymerization of pectins of methyl esterification degree from 13 to 75%, with an endo mode of action. Cannot degrade polygalacturonate. Also displays protopectinase activity, i.e. releases pectin from protopectin. The protein is Pectin lyase (pelB) of Bacillus subtilis.